The chain runs to 306 residues: Non-specific ribonucleoside hydrolase RihC (306 aa).

The active site involves His-235.

The protein belongs to the IUNH family. RihC subfamily.

Hydrolyzes both purine and pyrimidine ribonucleosides with a broad-substrate specificity. The polypeptide is Non-specific ribonucleoside hydrolase RihC (Salmonella heidelberg (strain SL476)).